An 898-amino-acid polypeptide reads, in one-letter code: Netrin receptor UNC5A (898 aa).

An N-terminal signal peptide occupies residues 1–25 (MAVRPGLWPALLGIVLTAWLRGSGA). Over 26-361 (QQSATVANPV…TSSGPEDVAL (336 aa)) the chain is Extracellular. The region spanning 44–141 (PHFLVEPEDV…SGTTKSQKAY (98 aa)) is the Ig-like domain. Cystine bridges form between Cys-65-Cys-126, Cys-77-Cys-124, and Cys-170-Cys-221. Residues Asn-107 and Asn-218 are each glycosylated (N-linked (GlcNAc...) asparagine). Positions 155–234 (PLAKEVSLEQ…NIVARRRSAS (80 aa)) constitute an Ig-like C2-type domain. TSP type-1 domains follow at residues 242-296 (NGGW…TLCP) and 298-350 (DGSW…DLCL). 3 C-linked (Man) tryptophan glycosylation sites follow: Trp-245, Trp-248, and Trp-251. Disulfide bonds link Cys-254–Cys-291, Cys-258–Cys-295, and Cys-269–Cys-281. 2 C-linked (Man) tryptophan glycosylation sites follow: Trp-301 and Trp-304. 3 disulfide bridges follow: Cys-310–Cys-344, Cys-314–Cys-349, and Cys-322–Cys-334. The N-linked (GlcNAc...) asparagine glycan is linked to Asn-343. A helical transmembrane segment spans residues 362 to 382 (YIGLVAVAVCLILLLLVLVLI). At 383–898 (YCRKKEGLDS…GLFTVSEAEC (516 aa)) the chain is on the cytoplasmic side. In terms of domain architecture, ZU5 spans 497-640 (NMAYGTFNFL…LGRFALVGEA (144 aa)). The interval 661–679 (SLEYNIRVYCLHDTHDALK) is interaction with DCC. In terms of domain architecture, Death spans 817–897 (QKIITSLDPP…AGLFTVSEAE (81 aa)).

The protein belongs to the unc-5 family. As to quaternary structure, homodimer and homooligomer. Interacts with the cytoplasmic part of DCC. Interacts with MAGED1. Interacts with PRKCABP, possibly mediating some interaction with PKC. Interacts (via extracellular domain) with FLRT2 (via extracellular domain). Interacts (via extracellular domain) with FLRT3 (via extracellular domain). In terms of processing, phosphorylated on cytoplasmic tyrosine residues. Phosphorylated by PKC in vitro. Proteolytically cleaved by caspases during apoptosis. The cleavage does not take place when the receptor is associated with netrin ligand. Its cleavage by caspases is required to induce apoptosis. Post-translationally, the two extracellular TSRs of UNC5A contain WxxWxxWxxC motifs that can be C-mannosylated on all tryptophans. DPY19L1 preferentially mannosylates the first two tryptophans and DPY19L3 prefers the third. C-mannosylation by DPY19L1 is required for transport of UNC5A from the endoplasmic reticulum to the cell surface. Restricted to central nervous system.

The protein localises to the cell membrane. Its subcellular location is the membrane raft. It is found in the cell projection. It localises to the neuron projection. Functionally, receptor for netrin required for axon guidance. Functions in the netrin signaling pathway and promotes neurite outgrowth in response to NTN1. Mediates axon repulsion of neuronal growth cones in the developing nervous system in response to netrin. Axon repulsion in growth cones may be mediated by its association with DCC that may trigger signaling for repulsion. It also acts as a dependence receptor required for apoptosis induction when not associated with netrin ligand. In Mus musculus (Mouse), this protein is Netrin receptor UNC5A (Unc5a).